The primary structure comprises 32 residues: ilv operon leader peptide (32 aa).

The protein is ilv operon leader peptide (ilvL) of Edwardsiella tarda.